Here is a 457-residue protein sequence, read N- to C-terminus: Bifunctional protein GlmU (457 aa).

Residues 1 to 230 (MSKRYAVVLA…FEESLGVNDR (230 aa)) are pyrophosphorylase. Residues 9–12 (LAAG), K23, Q73, and 78–79 (GT) contribute to the UDP-N-acetyl-alpha-D-glucosamine site. D103 serves as a coordination point for Mg(2+). Residues G140, E155, N170, and N228 each contribute to the UDP-N-acetyl-alpha-D-glucosamine site. Mg(2+) is bound at residue N228. Residues 231-251 (IALAEASRLMQRRINENHMRN) are linker. Residues 252-457 (GVTLVNPENT…GYAKHLNHGK (206 aa)) form an N-acetyltransferase region. 2 residues coordinate UDP-N-acetyl-alpha-D-glucosamine: R333 and K351. H363 acts as the Proton acceptor in catalysis. The UDP-N-acetyl-alpha-D-glucosamine site is built by Y366 and N377. Residues 386 to 387 (NY), A423, and R440 contribute to the acetyl-CoA site.

In the N-terminal section; belongs to the N-acetylglucosamine-1-phosphate uridyltransferase family. It in the C-terminal section; belongs to the transferase hexapeptide repeat family. Homotrimer. The cofactor is Mg(2+).

It is found in the cytoplasm. It catalyses the reaction alpha-D-glucosamine 1-phosphate + acetyl-CoA = N-acetyl-alpha-D-glucosamine 1-phosphate + CoA + H(+). It carries out the reaction N-acetyl-alpha-D-glucosamine 1-phosphate + UTP + H(+) = UDP-N-acetyl-alpha-D-glucosamine + diphosphate. The protein operates within nucleotide-sugar biosynthesis; UDP-N-acetyl-alpha-D-glucosamine biosynthesis; N-acetyl-alpha-D-glucosamine 1-phosphate from alpha-D-glucosamine 6-phosphate (route II): step 2/2. It participates in nucleotide-sugar biosynthesis; UDP-N-acetyl-alpha-D-glucosamine biosynthesis; UDP-N-acetyl-alpha-D-glucosamine from N-acetyl-alpha-D-glucosamine 1-phosphate: step 1/1. Its pathway is bacterial outer membrane biogenesis; LPS lipid A biosynthesis. Functionally, catalyzes the last two sequential reactions in the de novo biosynthetic pathway for UDP-N-acetylglucosamine (UDP-GlcNAc). The C-terminal domain catalyzes the transfer of acetyl group from acetyl coenzyme A to glucosamine-1-phosphate (GlcN-1-P) to produce N-acetylglucosamine-1-phosphate (GlcNAc-1-P), which is converted into UDP-GlcNAc by the transfer of uridine 5-monophosphate (from uridine 5-triphosphate), a reaction catalyzed by the N-terminal domain. The sequence is that of Bifunctional protein GlmU from Listeria monocytogenes serotype 4b (strain F2365).